The sequence spans 212 residues: Troponin I, cardiac muscle (212 aa).

Residues Met1–Gly11 are compositionally biased toward polar residues. Positions Met1–Ala45 are disordered. Ala2 carries the N-acetylalanine modification. Ser5 is modified (phosphoserine). Phosphoserine; by PKA and PKD/PRKD1 occurs at positions 24 and 25. Position 28 is a phosphotyrosine (Tyr28). Thr33 is subject to Phosphothreonine; by STK4/MST1. The involved in binding TNC stretch occupies residues Glu34–Arg81. 2 positions are modified to phosphoserine; by PKC/PRKCE: Ser44 and Ser46. Thr53 carries the post-translational modification Phosphothreonine; by STK4/MST1. Residue Ser79 is modified to Phosphoserine. Thr80 bears the Phosphothreonine mark. Positions Asn131–Ile151 are involved in binding TNC and actin. Thr145 is subject to Phosphothreonine; by STK4/MST1. Residue Ser152 is modified to Phosphoserine; by PAK3. The residue at position 183 (Thr183) is a Phosphothreonine. Residue Ser201 is modified to Phosphoserine.

The protein belongs to the troponin I family. As to quaternary structure, interacts with TRIM63. Binds to actin and tropomyosin. Interacts with STK4/MST1. In terms of processing, phosphorylated at Ser-24 and Ser-25 by PRKD1; phosphorylation reduces myofilament calcium sensitivity. Phosphorylated preferentially at Thr-33. Phosphorylation by STK4/MST1 alters its binding affinity to TNNC1 (cardiac Tn-C) and TNNT2 (cardiac Tn-T). Phosphorylated at Ser-44 and Ser-46 by PRKCE; phosphorylation increases myocardium contractile dysfunction.

Its function is as follows. Troponin I is the inhibitory subunit of troponin, the thin filament regulatory complex which confers calcium-sensitivity to striated muscle actomyosin ATPase activity. This Bos taurus (Bovine) protein is Troponin I, cardiac muscle (TNNI3).